A 399-amino-acid chain; its full sequence is Forkhead box protein A4 (399 aa).

The segment at residues 119–213 is a DNA-binding region (fork-head); the sequence is KPPYSYISLI…ENGCYLRRQK (95 aa). Basic and acidic residues predominate over residues 219 to 234; it reads RSKSGEREKKVNKPGD. The segment at 219-290 is disordered; the sequence is RSKSGEREKK…VGLSPTSEQA (72 aa). The segment covering 267-277 has biased composition (polar residues); the sequence is STGSSIHQASG.

It localises to the nucleus. In terms of biological role, transcriptional repressor involved in embryonic nervous system development. Plays a role in the induction and patterning of the anterior-posterior neural axis. Involved in the establishment of floor plate differentiation from neural plate cells during gastrulation. Binds the anf1 promoter sequence to restrict expression of anf1 to the anterior of the neural plate, thereby patterning the forebrain. Can bind to the HNF-3-alpha DNA target sequence. Cooperates with t/bra in a dose-dependent manner to specify dorsal mesoderm formation, including notochord. May be involved in the dorso-ventral patterning of the mesoderm. Binds to DNA via the target sequence 5'-[GA]TAAA[TC]A-3', with 5'-GTAAATA-3' being the preferred binding site. The polypeptide is Forkhead box protein A4 (Xenopus tropicalis (Western clawed frog)).